The sequence spans 297 residues: tRNA dimethylallyltransferase (297 aa).

Residue 10-17 participates in ATP binding; that stretch reads GITASGKS. 12-17 contributes to the substrate binding site; sequence TASGKS. Residues 36 to 39 form an interaction with substrate tRNA region; sequence DSKQ.

The protein belongs to the IPP transferase family. As to quaternary structure, monomer. Mg(2+) is required as a cofactor.

It carries out the reaction adenosine(37) in tRNA + dimethylallyl diphosphate = N(6)-dimethylallyladenosine(37) in tRNA + diphosphate. In terms of biological role, catalyzes the transfer of a dimethylallyl group onto the adenine at position 37 in tRNAs that read codons beginning with uridine, leading to the formation of N6-(dimethylallyl)adenosine (i(6)A). The polypeptide is tRNA dimethylallyltransferase (Wolbachia pipientis subsp. Culex pipiens (strain wPip)).